We begin with the raw amino-acid sequence, 394 residues long: 1-deoxy-D-xylulose 5-phosphate reductoisomerase (394 aa).

Residues Thr10, Gly11, Ser12, Ile13, Gly38, Arg39, Asn40, and Asn123 each coordinate NADPH. Lys124 lines the 1-deoxy-D-xylulose 5-phosphate pocket. Residue Glu125 participates in NADPH binding. A Mn(2+)-binding site is contributed by Asp149. Residues Ser150, Glu151, Ser175, and His198 each contribute to the 1-deoxy-D-xylulose 5-phosphate site. Glu151 is a Mn(2+) binding site. Gly204 contributes to the NADPH binding site. 1-deoxy-D-xylulose 5-phosphate-binding residues include Ser211, Asn216, Lys217, and Glu220. Glu220 contributes to the Mn(2+) binding site.

The protein belongs to the DXR family. The cofactor is Mg(2+). Mn(2+) is required as a cofactor.

The catalysed reaction is 2-C-methyl-D-erythritol 4-phosphate + NADP(+) = 1-deoxy-D-xylulose 5-phosphate + NADPH + H(+). It functions in the pathway isoprenoid biosynthesis; isopentenyl diphosphate biosynthesis via DXP pathway; isopentenyl diphosphate from 1-deoxy-D-xylulose 5-phosphate: step 1/6. In terms of biological role, catalyzes the NADPH-dependent rearrangement and reduction of 1-deoxy-D-xylulose-5-phosphate (DXP) to 2-C-methyl-D-erythritol 4-phosphate (MEP). In Cereibacter sphaeroides (strain ATCC 17029 / ATH 2.4.9) (Rhodobacter sphaeroides), this protein is 1-deoxy-D-xylulose 5-phosphate reductoisomerase.